Reading from the N-terminus, the 234-residue chain is 1-(5-phosphoribosyl)-5-[(5-phosphoribosylamino)methylideneamino] imidazole-4-carboxamide isomerase (234 aa).

Residue Asp-9 is the Proton acceptor of the active site. Asp-131 acts as the Proton donor in catalysis.

This sequence belongs to the HisA/HisF family.

The protein localises to the cytoplasm. The catalysed reaction is 1-(5-phospho-beta-D-ribosyl)-5-[(5-phospho-beta-D-ribosylamino)methylideneamino]imidazole-4-carboxamide = 5-[(5-phospho-1-deoxy-D-ribulos-1-ylimino)methylamino]-1-(5-phospho-beta-D-ribosyl)imidazole-4-carboxamide. It functions in the pathway amino-acid biosynthesis; L-histidine biosynthesis; L-histidine from 5-phospho-alpha-D-ribose 1-diphosphate: step 4/9. The polypeptide is 1-(5-phosphoribosyl)-5-[(5-phosphoribosylamino)methylideneamino] imidazole-4-carboxamide isomerase (Staphylococcus aureus (strain MRSA252)).